The following is a 637-amino-acid chain: Conglutin beta 5 (637 aa).

Residues 1–30 (MAKMRVRFPMLVLLLGVVFLLAVSIGIAYG) form the signal peptide. Composition is skewed to basic and acidic residues over residues 33–105 (DVIK…REQE), 136–174 (RREEREQEQGSSSESRRQSGDERRHRHEKREQREEREQE), and 184–203 (DYGRRQRHEGREQREEREQE). Disordered stretches follow at residues 33 to 221 (DVIK…YFSS) and 384 to 439 (EQED…LRSN). Positions 217–375 (YYFSSERFQT…TFNTHYEEIQ (159 aa)) constitute a Cupin type-1 1 domain. Over residues 389-417 (EQRREQEQSHQDEGVIVRVSKEQIQELRK) the composition is skewed to basic and acidic residues. Positions 434–594 (FNLRSNEPIY…IFPGSAEDVE (161 aa)) constitute a Cupin type-1 2 domain. N-linked (GlcNAc...) asparagine glycosylation is present at Asn-544. Positions 606 to 615 (ANAQPQQQQQ) are enriched in low complexity. Residues 606-626 (ANAQPQQQQQQREKEGRRGRR) form a disordered region.

This sequence belongs to the 7S seed storage protein family. As to quaternary structure, component of globulins complexes which accumulate in seeds.

Seed storage protein. Accumulates during seed development and is hydrolyzed after germination to provide a carbon and nitrogen source for the developing seedling. The chain is Conglutin beta 5 from Lupinus angustifolius (Narrow-leaved blue lupine).